A 233-amino-acid polypeptide reads, in one-letter code: Large ribosomal subunit protein uL3 (233 aa).

A disordered region spans residues 146–171 (GSQRASHGNSRSHRVPGSIGQAQDPG). N5-methylglutamine is present on glutamine 168.

It belongs to the universal ribosomal protein uL3 family. As to quaternary structure, part of the 50S ribosomal subunit. Forms a cluster with proteins L14 and L19. In terms of processing, methylated by PrmB.

In terms of biological role, one of the primary rRNA binding proteins, it binds directly near the 3'-end of the 23S rRNA, where it nucleates assembly of the 50S subunit. The chain is Large ribosomal subunit protein uL3 from Bordetella bronchiseptica (strain ATCC BAA-588 / NCTC 13252 / RB50) (Alcaligenes bronchisepticus).